A 347-amino-acid polypeptide reads, in one-letter code: MSGLLCYCRPGFEPELAAELSVRAAFVGIAGYARTQRNDGYVLFVCDEAAQLAAKLQWRELIFARQKLVVIAELKGIDPKDRITPILAALDGQQRFGDLWVEHPDSDAGKPLAGLARSFGNALRPALRKAGLLTDKPQPRQPRLHVCFLDGDHALLAVADSADSAPWPLGIPRLKLLPEAPSRSALKLDEALLTLLTPEERDALVKPGMRAADLGAAPGGWTWVLTRQHVHVTSVDNGPLREHVLETGLVEHLRADGFHWKPAQPLDWMVCDMVEQPRRVAERMATWVREGWCRNTIFNLKLPMKKRWDETRLCLDLFEQQAERSLSVRAKQLYHDREEITVLAMRD.

S-adenosyl-L-methionine contacts are provided by residues S184, 217-220 (APGG), D236, D256, and D272. The active-site Proton acceptor is the K301.

The protein belongs to the class I-like SAM-binding methyltransferase superfamily. RNA methyltransferase RlmE family. RlmM subfamily. As to quaternary structure, monomer.

The protein localises to the cytoplasm. It catalyses the reaction cytidine(2498) in 23S rRNA + S-adenosyl-L-methionine = 2'-O-methylcytidine(2498) in 23S rRNA + S-adenosyl-L-homocysteine + H(+). Functionally, catalyzes the 2'-O-methylation at nucleotide C2498 in 23S rRNA. In Xanthomonas axonopodis pv. citri (strain 306), this protein is Ribosomal RNA large subunit methyltransferase M.